Consider the following 158-residue polypeptide: Low molecular weight phosphotyrosine protein phosphatase (158 aa).

Alanine 2 carries the post-translational modification N-acetylalanine. The active-site Nucleophile is the cysteine 13. Arginine 19 is an active-site residue. Aspartate 130 (proton donor) is an active-site residue. 2 positions are modified to phosphotyrosine: tyrosine 132 and tyrosine 133.

The protein belongs to the low molecular weight phosphotyrosine protein phosphatase family. As to quaternary structure, interacts with EPHA2; dephosphorylates EPHA2. Interacts with EPHB1. Interacts with the SH3 domain of SPTAN1. There is no interaction observed for isoform 2. In terms of processing, phosphorylated by LCK. Phosphorylation at Tyr-132 increases its phosphatase activity.

It is found in the cytoplasm. The enzyme catalyses O-phospho-L-tyrosyl-[protein] + H2O = L-tyrosyl-[protein] + phosphate. It carries out the reaction a phosphate monoester + H2O = an alcohol + phosphate. Inhibited by sulfhydryl reagents. In terms of biological role, acts on tyrosine phosphorylated proteins, low-MW aryl phosphates and natural and synthetic acyl phosphates with differences in substrate specificity between isoform 1 and isoform 2. The polypeptide is Low molecular weight phosphotyrosine protein phosphatase (Rattus norvegicus (Rat)).